The following is a 242-amino-acid chain: Lactate utilization protein A 2 (242 aa).

The protein belongs to the LutA/YkgE family.

Its function is as follows. Is involved in L-lactate degradation and allows cells to grow with lactate as the sole carbon source. The protein is Lactate utilization protein A 2 of Bacillus cereus (strain ZK / E33L).